Consider the following 175-residue polypeptide: NADH-quinone oxidoreductase subunit B (175 aa).

The [4Fe-4S] cluster site is built by Cys-54, Cys-55, Cys-119, and Cys-149.

The protein belongs to the complex I 20 kDa subunit family. In terms of assembly, NDH-1 is composed of at least 14 different subunits, Nqo1 to Nqo14. The complex has a L-shaped structure, with the hydrophobic arm (subunits Nqo7, Nqo8, Nqo10 to Nqo14) embedded in the inner membrane and the hydrophilic peripheral arm (subunits Nqo1 to Nqo6, Nqo9) protruding into the bacterial cytoplasm. The hydrophilic domain contains all the redox centers. NADH-quinone oxidoreductase forms a supercomplex with ubiquinol-cytochrome c reductase complex (complex III or cytochrome b-c1 complex) and cytochrome c oxidase (complex IV), which stabilizes the NADH-quinone oxidoreductase complex. [4Fe-4S] cluster is required as a cofactor.

Its subcellular location is the cell inner membrane. It catalyses the reaction a quinone + NADH + 5 H(+)(in) = a quinol + NAD(+) + 4 H(+)(out). In terms of biological role, NDH-1 shuttles electrons from NADH, via FMN and iron-sulfur (Fe-S) centers, to quinones in the respiratory chain. The immediate electron acceptor for the enzyme in this species is believed to be ubiquinone. Couples the redox reaction to proton translocation (for every two electrons transferred, four hydrogen ions are translocated across the cytoplasmic membrane), and thus conserves the redox energy in a proton gradient. The sequence is that of NADH-quinone oxidoreductase subunit B from Paracoccus denitrificans (strain Pd 1222).